Here is a 239-residue protein sequence, read N- to C-terminus: Ribonuclease HII (239 aa).

Residues 30–221 (GPVAGVDEVG…VRRVATRSNG (192 aa)) form the RNase H type-2 domain. A divalent metal cation-binding residues include aspartate 36, glutamate 37, and aspartate 130. The tract at residues 217–239 (TRSNGAATAEREADPPQERDGTG) is disordered. Residues 225–239 (AEREADPPQERDGTG) show a composition bias toward basic and acidic residues.

This sequence belongs to the RNase HII family. It depends on Mn(2+) as a cofactor. Mg(2+) is required as a cofactor.

It is found in the cytoplasm. The enzyme catalyses Endonucleolytic cleavage to 5'-phosphomonoester.. Functionally, endonuclease that specifically degrades the RNA of RNA-DNA hybrids. This Mycobacterium ulcerans (strain Agy99) protein is Ribonuclease HII.